We begin with the raw amino-acid sequence, 274 residues long: Coagulation factor IX (274 aa).

Residue Tyr-23 is modified to Sulfotyrosine. N-linked (GlcNAc...) asparagine glycosylation is present at Asn-25. The residue at position 26 (Ser-26) is a Phosphoserine. The N-linked (GlcNAc...) asparagine glycan is linked to Asn-35. A glycan (O-linked (GalNAc...) threonine) is linked at Thr-37. N-linked (GlcNAc...) asparagine glycosylation occurs at Asn-40. The Peptidase S1 domain occupies 49–274; that stretch reads VVGGEDAARG…IYTKVSRYEV (226 aa). A disulfide bridge links Cys-74 with Cys-90. The active-site Charge relay system is the His-89. Residues Glu-103, Asn-105, Glu-110, and Glu-113 each contribute to the Ca(2+) site. An N-linked (GlcNAc...) asparagine glycan is attached at Asn-128. Asp-137 acts as the Charge relay system in catalysis. 2 cysteine pairs are disulfide-bonded: Cys-204–Cys-218 and Cys-229–Cys-257. The active-site Charge relay system is the Ser-233.

It belongs to the peptidase S1 family. Heterodimer of a light chain and a heavy chain; disulfide-linked. Interacts (inactive and activated) with F11 (activated) in calcium-dependent manner. Interacts with SERPINC1. Post-translationally, activated by factor XIa, which excises the activation peptide. The propeptide can also be removed by snake venom protease. Activated by coagulation factor VIIa-tissue factor (F7-F3) complex in calcium-dependent manner.

The protein localises to the secreted. The catalysed reaction is Selective cleavage of Arg-|-Ile bond in factor X to form factor Xa.. Functionally, factor IX is a vitamin K-dependent plasma protein that participates in the intrinsic pathway of blood coagulation by converting factor X to its active form in the presence of Ca(2+) ions, phospholipids, and factor VIIIa. This chain is Coagulation factor IX (F9), found in Ovis aries (Sheep).